A 418-amino-acid chain; its full sequence is Putative competence-damage inducible protein (418 aa).

Belongs to the CinA family.

The protein is Putative competence-damage inducible protein of Streptococcus pneumoniae (strain 70585).